The following is a 434-amino-acid chain: V-type ATP synthase beta chain (434 aa).

It belongs to the ATPase alpha/beta chains family.

Functionally, produces ATP from ADP in the presence of a proton gradient across the membrane. The V-type beta chain is a regulatory subunit. This is V-type ATP synthase beta chain (atpB) from Borreliella burgdorferi (strain ATCC 35210 / DSM 4680 / CIP 102532 / B31) (Borrelia burgdorferi).